Reading from the N-terminus, the 421-residue chain is Putative leucine-rich repeat protein R380 (421 aa).

7 LRR repeats span residues 48 to 69 (YLEK…QYLP), 70 to 85 (KIKE…THIP), 89 to 110 (NLIK…NQSK), 111 to 129 (LLYL…IFLP), 130 to 150 (ECRE…NYFP), 151 to 172 (NLRI…SSLI), and 173 to 191 (ELNI…PQLV).

The polypeptide is Putative leucine-rich repeat protein R380 (Acanthamoeba polyphaga (Amoeba)).